A 353-amino-acid chain; its full sequence is Protein MGF 360-13L (353 aa).

Belongs to the asfivirus MGF 360 family.

Functionally, plays a role in virus cell tropism, and may be required for efficient virus replication in macrophages. This is Protein MGF 360-13L from Ornithodoros (relapsing fever ticks).